We begin with the raw amino-acid sequence, 294 residues long: Probable 2-(5''-triphosphoribosyl)-3'-dephosphocoenzyme-A synthase (294 aa).

It belongs to the CitG/MdcB family.

The enzyme catalyses 3'-dephospho-CoA + ATP = 2'-(5''-triphospho-alpha-D-ribosyl)-3'-dephospho-CoA + adenine. This is Probable 2-(5''-triphosphoribosyl)-3'-dephosphocoenzyme-A synthase from Streptococcus pyogenes serotype M2 (strain MGAS10270).